Reading from the N-terminus, the 478-residue chain is H(+)/Cl(-) exchange transporter ClcA (478 aa).

Over 1–32 the chain is Cytoplasmic; the sequence is MTHSTQQLSPEGVAEGKRGRLIRELVNRDKTP. Residues 33–69 traverse the membrane as a helical segment; it reads LIILIMAAVVGVVTGLLGVAFDRGVDWVQQQRLLALA. At 70 to 76 the chain is on the periplasmic side; the sequence is NVADSAL. A helical membrane pass occupies residues 77 to 100; that stretch reads LVWPLAFIMSALLAMMGYFLVSRF. Residues 106-110 carry the Selectivity filter part_1 motif; sequence GSGIP. Ser107 is a chloride binding site. The segment at residues 109-116 is an intramembrane region (helical); sequence IPEIEGAM. Topologically, residues 117–123 are cytoplasmic; it reads EEMRPVR. 2 consecutive transmembrane segments (helical) span residues 124 to 141 and 148 to 166; these read WWRV…TLGA and EGPM…VDIF. Residues 146–150 carry the Selectivity filter part_2 motif; it reads GREGP. The Cytoplasmic portion of the chain corresponds to 167–176; that stretch reads RLRSPEARHS. 2 consecutive intramembrane regions (helical) follow at residues 177–189 and 193–201; these read LLAT…LSAA and PLAGILFVI. Topologically, residues 202–214 are cytoplasmic; that stretch reads EEMRSQFRYSLVS. Residues 215–232 form a helical membrane-spanning segment; sequence IKAVFIGVITSTIVYRYF. Residues 233–252 are Periplasmic-facing; it reads NGERAIIEVGKLSDAPLNTL. A helical transmembrane segment spans residues 253 to 281; it reads WLYLLLGIIFGAVGVIFNALIFRTQDMFV. Topologically, residues 282 to 287 are cytoplasmic; the sequence is RFHGGD. Residues 288–309 form a helical membrane-spanning segment; that stretch reads WRKLVLIGGLLGGMCGLLALLH. At 310 to 329 the chain is on the periplasmic side; it reads GNAVGGGFALIPIAAAGNFS. Helical transmembrane passes span 330–349 and 355–376; these read IGML…LCFG and GIFA…LSCA. Positions 355-359 match the Selectivity filter part_3 motif; the sequence is GIFAP. Chloride contacts are provided by Ile356 and Phe357. At 377–386 the chain is on the periplasmic side; that stretch reads HFFPQYGIEA. Residues 387 to 401 constitute an intramembrane region (helical); that stretch reads GTFAIAGMGALFAAS. The segment at residues 402–404 is an intramembrane region (note=Loop between two helices); it reads VRA. The segment at residues 405-416 is an intramembrane region (helical); the sequence is PLTGIVLVLEMT. Positions 417–421 form an intramembrane region, note=Loop between two helices; the sequence is DNYQL. The chain crosses the membrane as a helical span at residues 422–438; that stretch reads ILPMIVTCLGATLIAQF. Residues 439–478 lie on the Cytoplasmic side of the membrane; that stretch reads MGGKPLYSAILARTLAKQEQARATVIAQEPAVENTPQTGR. Chloride is bound at residue Tyr445.

The protein belongs to the chloride channel (TC 2.A.49) family. ClcA subfamily. Homodimer.

The protein localises to the cell inner membrane. It carries out the reaction 2 chloride(in) + H(+)(out) = 2 chloride(out) + H(+)(in). Proton-coupled chloride transporter. Functions as antiport system and exchanges two chloride ions for 1 proton. Probably acts as an electrical shunt for an outwardly-directed proton pump that is linked to amino acid decarboxylation, as part of the extreme acid resistance (XAR) response. This chain is H(+)/Cl(-) exchange transporter ClcA, found in Yersinia pseudotuberculosis serotype IB (strain PB1/+).